The primary structure comprises 411 residues: DNA polymerase IV (411 aa).

The UmuC domain occupies 18 to 211 (VVHVDMDCFY…LDVADLHGVG (194 aa)). 2 residues coordinate Mg(2+): aspartate 22 and aspartate 130. Residue glutamate 131 is part of the active site. Disordered stretches follow at residues 248 to 280 (FHRRARGADSRPVEPRGKPKSLSRESSFDGATE) and 376 to 411 (GFSGDETGDGGGHEGGACGGAGRGSCGGQTTLDEFT). Over residues 253 to 274 (RGADSRPVEPRGKPKSLSRESS) the composition is skewed to basic and acidic residues. Residues 384 to 402 (DGGGHEGGACGGAGRGSCG) show a composition bias toward gly residues.

Belongs to the DNA polymerase type-Y family. Monomer. It depends on Mg(2+) as a cofactor.

The protein resides in the cytoplasm. The catalysed reaction is DNA(n) + a 2'-deoxyribonucleoside 5'-triphosphate = DNA(n+1) + diphosphate. Functionally, poorly processive, error-prone DNA polymerase involved in untargeted mutagenesis. Copies undamaged DNA at stalled replication forks, which arise in vivo from mismatched or misaligned primer ends. These misaligned primers can be extended by PolIV. Exhibits no 3'-5' exonuclease (proofreading) activity. May be involved in translesional synthesis. This chain is DNA polymerase IV, found in Halobacterium salinarum (strain ATCC 29341 / DSM 671 / R1).